Reading from the N-terminus, the 118-residue chain is Ribulose bisphosphate carboxylase small subunit (118 aa).

The protein belongs to the RuBisCO small chain family. In terms of assembly, heterohexadecamer of 8 large and 8 small subunits.

Its subcellular location is the carboxysome. In terms of biological role, ruBisCO catalyzes two reactions: the carboxylation of D-ribulose 1,5-bisphosphate, the primary event in carbon dioxide fixation, as well as the oxidative fragmentation of the pentose substrate in the photorespiration process. Both reactions occur simultaneously and in competition at the same active site. Although the small subunit is not catalytic it is essential for maximal activity. The sequence is that of Ribulose bisphosphate carboxylase small subunit from Thermosynechococcus vestitus (strain NIES-2133 / IAM M-273 / BP-1).